Consider the following 351-residue polypeptide: MTATIKLGQLAEFLGATLSGDGEKEITGLATLQEAGPAQLSFLANPQYRKYLVDCQAGAVLLKAADAEAYAGDALVVADPYLAYARISHLFDPKPKAQAGVHPSAVIAADAQVDPAASIGPFAVIESGARIAAGVTIGAHCFIGARCEIGEGGWLAPRVTLYHDVRIGKRVVIQSGAVLGGEGFGFANEKGVWQKIAQIGGVTIGDDVEIGVNTAIDRGALADTVIGNGVKLDNQIQIAHNVQVGDHTAMAACVGISGSTKIGKHCMLAGGVGLVGHIDICDNVFLTGMTMVTHSITEPGAYSSGTAMQPAAEWRKSAARIRQLDDLARRLRQLEKRVGDVTPGGNASSDG.

His-240 acts as the Proton acceptor in catalysis.

The protein belongs to the transferase hexapeptide repeat family. LpxD subfamily. Homotrimer.

The enzyme catalyses a UDP-3-O-[(3R)-3-hydroxyacyl]-alpha-D-glucosamine + a (3R)-hydroxyacyl-[ACP] = a UDP-2-N,3-O-bis[(3R)-3-hydroxyacyl]-alpha-D-glucosamine + holo-[ACP] + H(+). It participates in bacterial outer membrane biogenesis; LPS lipid A biosynthesis. Catalyzes the N-acylation of UDP-3-O-acylglucosamine using 3-hydroxyacyl-ACP as the acyl donor. Is involved in the biosynthesis of lipid A, a phosphorylated glycolipid that anchors the lipopolysaccharide to the outer membrane of the cell. The polypeptide is UDP-3-O-acylglucosamine N-acyltransferase (Pseudomonas fluorescens (strain ATCC BAA-477 / NRRL B-23932 / Pf-5)).